We begin with the raw amino-acid sequence, 347 residues long: NADH-ubiquinone oxidoreductase chain 2 (347 aa).

The next 11 membrane-spanning stretches (helical) occupy residues M1 to M21, H25 to M45, Y59 to T79, I96 to P116, C127 to P147, I149 to G169, I178 to P198, M200 to I220, I237 to L257, I276 to L296, and L325 to L345.

The protein belongs to the complex I subunit 2 family. Core subunit of respiratory chain NADH dehydrogenase (Complex I) which is composed of 45 different subunits. Interacts with TMEM242.

It localises to the mitochondrion inner membrane. It carries out the reaction a ubiquinone + NADH + 5 H(+)(in) = a ubiquinol + NAD(+) + 4 H(+)(out). In terms of biological role, core subunit of the mitochondrial membrane respiratory chain NADH dehydrogenase (Complex I) which catalyzes electron transfer from NADH through the respiratory chain, using ubiquinone as an electron acceptor. Essential for the catalytic activity and assembly of complex I. In Natalus tumidirostris (Trinidadian funnel-eared bat), this protein is NADH-ubiquinone oxidoreductase chain 2.